The following is a 366-amino-acid chain: S-adenosylmethionine decarboxylase proenzyme 1 (366 aa).

Active-site residues include Glu-9 and Glu-12. Glu-68 contributes to the substrate binding site. Residue Ser-69 is the Schiff-base intermediate with substrate; via pyruvic acid of the active site. Ser-69 bears the Pyruvic acid (Ser); by autocatalysis mark. The Proton donor; for catalytic activity role is filled by Cys-83. Residues Ser-233 and His-246 each act as proton acceptor; for processing activity in the active site. Residue Glu-250 coordinates substrate.

This sequence belongs to the eukaryotic AdoMetDC family. Pyruvate serves as cofactor. Is synthesized initially as an inactive proenzyme. Formation of the active enzyme involves a self-maturation process in which the active site pyruvoyl group is generated from an internal serine residue via an autocatalytic post-translational modification. Two non-identical subunits are generated from the proenzyme in this reaction, and the pyruvate is formed at the N-terminus of the alpha chain, which is derived from the carboxyl end of the proenzyme. The post-translation cleavage follows an unusual pathway, termed non-hydrolytic serinolysis, in which the side chain hydroxyl group of the serine supplies its oxygen atom to form the C-terminus of the beta chain, while the remainder of the serine residue undergoes an oxidative deamination to produce ammonia and the pyruvoyl group blocking the N-terminus of the alpha chain.

The catalysed reaction is S-adenosyl-L-methionine + H(+) = S-adenosyl 3-(methylsulfanyl)propylamine + CO2. The protein operates within amine and polyamine biosynthesis; S-adenosylmethioninamine biosynthesis; S-adenosylmethioninamine from S-adenosyl-L-methionine: step 1/1. Its function is as follows. Essential for biosynthesis of the polyamines spermidine and spermine. Essential for polyamine homeostasis, and normal plant embryogenesis, growth and development. The sequence is that of S-adenosylmethionine decarboxylase proenzyme 1 from Arabidopsis thaliana (Mouse-ear cress).